Reading from the N-terminus, the 277-residue chain is Probable septum site-determining protein MinC (277 aa).

The segment at 137 to 164 (ATTGNAPAEPAPAEPAAPAAAPQPPAVP) is disordered. Pro residues predominate over residues 145-164 (EPAPAEPAAPAAAPQPPAVP).

The protein belongs to the MinC family. Interacts with MinD and FtsZ.

Cell division inhibitor that blocks the formation of polar Z ring septums. Rapidly oscillates between the poles of the cell to destabilize FtsZ filaments that have formed before they mature into polar Z rings. Prevents FtsZ polymerization. This Bordetella petrii (strain ATCC BAA-461 / DSM 12804 / CCUG 43448) protein is Probable septum site-determining protein MinC.